A 428-amino-acid chain; its full sequence is Putative aspergillopepsin A-like aspartic endopeptidase AFUA_2G15950 (428 aa).

The signal sequence occupies residues 1-19; the sequence is MHSLQSFLFLLLLGYGVFA. The propeptide at 20 to 90 is activation peptide; sequence APTSPQAQSQ…GTAANLVTDV (71 aa). Residues 110–425 form the Peptidase A1 domain; the sequence is FVSPVTIGGQ…DLRGPSIGLA (316 aa). The active site involves D126. The N-linked (GlcNAc...) asparagine glycan is linked to N276. D312 is an active-site residue. N-linked (GlcNAc...) asparagine glycosylation occurs at N380.

Belongs to the peptidase A1 family.

The protein resides in the secreted. In Aspergillus fumigatus (strain ATCC MYA-4609 / CBS 101355 / FGSC A1100 / Af293) (Neosartorya fumigata), this protein is Putative aspergillopepsin A-like aspartic endopeptidase AFUA_2G15950.